A 258-amino-acid polypeptide reads, in one-letter code: Phosphosulfolactate synthase (258 aa).

Belongs to the phosphosulfolactate synthase family.

The enzyme catalyses (2R)-O-phospho-3-sulfolactate = phosphoenolpyruvate + sulfite + H(+). Its pathway is cofactor biosynthesis; coenzyme M biosynthesis; sulfoacetaldehyde from phosphoenolpyruvate and sulfite: step 1/4. Catalyzes the addition of sulfite to phosphoenolpyruvate (PEP) to yield (2R)-phospho-3-sulfolactate (PSL). The chain is Phosphosulfolactate synthase (comA) from Methanothermobacter thermautotrophicus (strain ATCC 29096 / DSM 1053 / JCM 10044 / NBRC 100330 / Delta H) (Methanobacterium thermoautotrophicum).